We begin with the raw amino-acid sequence, 89 residues long: LSM complex subunit LSM3 (89 aa).

One can recognise a Sm domain in the interval 3 to 82 (TPLDLLKLNL…VTLISTPSED (80 aa)).

This sequence belongs to the snRNP Sm proteins family. Component of the heptameric LSM1-LSM7 complex that forms a seven-membered ring structure with a donut shape. The LSm subunits are arranged in the order LSM1, LSM2, LSM3, LSM6, LSM5, LSM7 and LSM4. Except for LSM1, where a C-terminal helix crosses the ring structure to form additional interactions with LSM3 and LSM6, each subunit interacts only with its two neighboring subunits. The LSM1-LSM7 complex interacts with PAT1; within the complex PAT1 has direct interactions with LSM2 and LSM3. The LSM1-LSM7 complex interacts with XRN1. Component of the heptameric LSM2-LSM8 complex that forms a seven-membered ring structure with a donut shape; an RNA strand can pass through the hole in the center of the ring structure. The LSm subunits are arranged in the order LSM8, LSM2, LSM3, LSM6, LSM5, LSM7 and LSM4. Component of the spliceosome U4/U6-U5 tri-snRNP complex composed of the U4, U6 and U5 snRNAs and at least PRP3, PRP4, PRP6, PRP8, PRP18, PRP31, PRP38, SNU13, SNU23, SNU66, SNU114, SPP381, SMB1, SMD1, SMD2, SMD3, SMX2, SMX3, LSM2, LSM3, LSM4, LSM5, LSM6, LSM7, LSM8, BRR2 and DIB1. May be found in a complex comprising LSM2-LSM7 without LSM1 or LSM8; the complex associates with pre-P RNA and snoRNA SNR5.

It is found in the nucleus. The protein resides in the nucleolus. Its subcellular location is the cytoplasm. In terms of biological role, component of LSm protein complexes, which are involved in RNA processing and may function in a chaperone-like manner. Component of the cytoplasmic LSM1-LSM7 complex which is involved in mRNA degradation by activating the decapping step. Together with PAT1, the LSM1-LSM7 complex binds to osmotic stress-activated mRNAs to attenuate the osmotic stress response, probably by limiting ribosome access to the mRNA and consequently translation. Component of the nuclear LSM2-LSM8 complex, which is involved in spliceosome assembly. The LSM2-LSM8 complex plays a role in the biogenesis of the spliceosomal U4/U6-U5 tri-snRNP complex by accelerating PRP24-mediated annealing of U4/U6 di-snRNA. The LSM2-LSM8 complex binds U6 snRNA terminating with a non-cyclic 3' phosphate group. LSM2-LSM8 is probably also involved in degradation of nuclear pre-mRNA by targeting them for decapping. LSM2-LSM8 could be involved in processing of pre-tRNAs, pre-rRNAs and U3 snoRNA, although involvement may be indirect. In a complex that probably contains LSM2-LSM7, but not LSM1 or LSM8, associates with the precursor of the RNA component of RNase P (pre-P RNA) and may be involved in maturing pre-P RNA; the complex also associates with snoRNA SNR5. This chain is LSM complex subunit LSM3 (LSM3), found in Saccharomyces cerevisiae (strain ATCC 204508 / S288c) (Baker's yeast).